A 487-amino-acid polypeptide reads, in one-letter code: Glycogen synthase 1 (487 aa).

Lys15 is an ADP-alpha-D-glucose binding site.

It belongs to the glycosyltransferase 1 family. Bacterial/plant glycogen synthase subfamily.

It carries out the reaction [(1-&gt;4)-alpha-D-glucosyl](n) + ADP-alpha-D-glucose = [(1-&gt;4)-alpha-D-glucosyl](n+1) + ADP + H(+). It participates in glycan biosynthesis; glycogen biosynthesis. In terms of biological role, synthesizes alpha-1,4-glucan chains using ADP-glucose. This is Glycogen synthase 1 from Nitrosococcus oceani (strain ATCC 19707 / BCRC 17464 / JCM 30415 / NCIMB 11848 / C-107).